We begin with the raw amino-acid sequence, 325 residues long: GMP reductase (325 aa).

The Thioimidate intermediate role is filled by Cys174. NADP(+) is bound at residue 203 to 226 (LIADGGIRTHGDIAKSIRFGATMV).

It belongs to the IMPDH/GMPR family. GuaC type 2 subfamily.

The enzyme catalyses IMP + NH4(+) + NADP(+) = GMP + NADPH + 2 H(+). Catalyzes the irreversible NADPH-dependent deamination of GMP to IMP. It functions in the conversion of nucleobase, nucleoside and nucleotide derivatives of G to A nucleotides, and in maintaining the intracellular balance of A and G nucleotides. This is GMP reductase from Pediococcus pentosaceus (strain ATCC 25745 / CCUG 21536 / LMG 10740 / 183-1w).